The sequence spans 898 residues: Cip1-interacting zinc finger protein (898 aa).

Disordered regions lie at residues 48-69, 157-305, and 318-471; these read QAPL…QPLL, QSLL…ALEA, and VQAQ…QPQV. Positions 170-203 are enriched in polar residues; it reads NPSQFNLSGRNPQKQARTSSSTTPNRKDSSSQTM. Ser-209 carries the phosphoserine modification. Thr-244 carries the phosphothreonine modification. Residues 263 to 273 are compositionally biased toward basic and acidic residues; that stretch reads RSSEEPTEKEP. A Glycyl lysine isopeptide (Lys-Gly) (interchain with G-Cter in SUMO2) cross-link involves residue Lys-280. The span at 318 to 327 shows a compositional bias: low complexity; sequence VQAQVQSQTQ. The segment covering 328–351 has biased composition (polar residues); sequence PRIPSTDTQVQPKLQKQAQTQTSP. Lys-340 participates in a covalent cross-link: Glycyl lysine isopeptide (Lys-Gly) (interchain with G-Cter in SUMO2). Ser-350 carries the post-translational modification Phosphoserine. Residues 355–383 show a composition bias toward low complexity; that stretch reads VLQQKQVQPQLQQEAEPQKQVQPQVQPQA. Polar residues predominate over residues 384–395; that stretch reads HSQGPRQVQLQQ. Residue Lys-401 forms a Glycyl lysine isopeptide (Lys-Gly) (interchain with G-Cter in SUMO2) linkage. The segment covering 402 to 435 has biased composition (low complexity); sequence QVQPQVQPQAHSQPPRQVQLQLQKQVQTQTYPQV. Residues 436–445 show a composition bias toward polar residues; the sequence is HTQAQPSVQP. Ser-547 bears the Phosphoserine mark. Residue Lys-549 forms a Glycyl lysine isopeptide (Lys-Gly) (interchain with G-Cter in SUMO2) linkage. The tract at residues 562–584 is disordered; sequence STVPLTPVPRPSDSVSSTPAATS. At Thr-567 the chain carries Phosphothreonine. Low complexity predominate over residues 572 to 584; that stretch reads PSDSVSSTPAATS. Glycyl lysine isopeptide (Lys-Gly) (interchain with G-Cter in SUMO2) cross-links involve residues Lys-588, Lys-680, and Lys-705. The Matrin-type zinc-finger motif lies at 799–830; that stretch reads YICRICHKFYHSNSGAQLSHCKSLGHFENLQK. A Phosphoserine modification is found at Ser-821. Lys-830 is covalently cross-linked (Glycyl lysine isopeptide (Lys-Gly) (interchain with G-Cter in SUMO2)). Phosphoserine is present on Ser-838. Residues 859–879 show a composition bias toward polar residues; that stretch reads LFTSSGRPPSQPNTQDKTPSK. The segment at 859-898 is disordered; that stretch reads LFTSSGRPPSQPNTQDKTPSKVTARPSQPPLPRRSTRLKT. Lys-879 participates in a covalent cross-link: Glycyl lysine isopeptide (Lys-Gly) (interchain with G-Cter in SUMO2).

Interacts with CIP/WAF1.

The protein localises to the nucleus. Functionally, may regulate the subcellular localization of CIP/WAF1. This chain is Cip1-interacting zinc finger protein (CIZ1), found in Homo sapiens (Human).